Consider the following 307-residue polypeptide: Mycothiol acetyltransferase (307 aa).

2 N-acetyltransferase domains span residues 12–152 (TRTD…APIP) and 160–307 (VTLR…YQRS). Residue Glu43 participates in 1D-myo-inositol 2-(L-cysteinylamino)-2-deoxy-alpha-D-glucopyranoside binding. Acetyl-CoA is bound at residue 87 to 89 (LAV). Glu187, Lys227, and Glu239 together coordinate 1D-myo-inositol 2-(L-cysteinylamino)-2-deoxy-alpha-D-glucopyranoside. Acetyl-CoA is bound by residues 243–245 (LGV) and 250–256 (HGGGLGK). Tyr278 serves as a coordination point for 1D-myo-inositol 2-(L-cysteinylamino)-2-deoxy-alpha-D-glucopyranoside.

It belongs to the acetyltransferase family. MshD subfamily. Monomer.

The enzyme catalyses 1D-myo-inositol 2-(L-cysteinylamino)-2-deoxy-alpha-D-glucopyranoside + acetyl-CoA = mycothiol + CoA + H(+). Functionally, catalyzes the transfer of acetyl from acetyl-CoA to desacetylmycothiol (Cys-GlcN-Ins) to form mycothiol. The protein is Mycothiol acetyltransferase of Salinispora arenicola (strain CNS-205).